A 588-amino-acid polypeptide reads, in one-letter code: Phosphatidylinositol-3,5-bisphosphate 3-phosphatase mtm-1 (588 aa).

Positions 20-91 constitute a GRAM domain; that stretch reads IQESIDLKLL…GQVSRIEKVG (72 aa). Residues 164-543 enclose the Myotubularin phosphatase domain; it reads GWKIYSAEKE…CGLHVWIDYY (380 aa). Residues N293, N316, and I317 each coordinate a 1,2-diacyl-sn-glycero-3-phospho-(1D-myo-inositol-3,5-bisphosphate). A 1,2-diacyl-sn-glycero-3-phospho-(1D-myo-inositol-3-phosphate) is bound by residues N293, N316, and I317. The active-site Phosphocysteine intermediate is C378. A 1,2-diacyl-sn-glycero-3-phospho-(1D-myo-inositol-3,5-bisphosphate) is bound by residues S379, D380, G381, W382, D383, R384, K420, and R424. A 1,2-diacyl-sn-glycero-3-phospho-(1D-myo-inositol-3-phosphate) contacts are provided by S379, D380, G381, W382, D383, and R384. S379 is a phosphate binding site. Phosphate is bound by residues G381, W382, D383, and R384. R424 serves as a coordination point for a 1,2-diacyl-sn-glycero-3-phospho-(1D-myo-inositol-3-phosphate). The stretch at 563 to 588 forms a coiled coil; it reads AQFVDEKKQLLDEIMALDDAAQKLTA.

Belongs to the protein-tyrosine phosphatase family. Non-receptor class myotubularin subfamily. In terms of tissue distribution, expressed in embryo, larva and in adults. Expressed in a few head and tail neurons. Expressed in hypodermis, body wall and pharyngeal muscles, sheath cells, vulva, distal tip cells and coelomocytes.

The protein resides in the cell membrane. The protein localises to the cell projection. It localises to the phagocytic cup. Its subcellular location is the apical cell membrane. It is found in the cytoplasmic granule membrane. The enzyme catalyses a 1,2-diacyl-sn-glycero-3-phospho-(1D-myo-inositol-3,5-bisphosphate) + H2O = a 1,2-diacyl-sn-glycero-3-phospho-(1D-myo-inositol-5-phosphate) + phosphate. The catalysed reaction is a 1,2-diacyl-sn-glycero-3-phospho-(1D-myo-inositol-3-phosphate) + H2O = a 1,2-diacyl-sn-glycero-3-phospho-(1D-myo-inositol) + phosphate. It carries out the reaction 1,2-dioctanoyl-sn-glycero-3-phospho-(1-D-myo-inositol-3-phosphate) + H2O = 1,2-dioctanoyl-sn-glycero-3-phospho-(1D-myo-inositol) + phosphate. Lipid phosphatase that specifically dephosphorylates phosphatidylinositol 3-phosphate (PI3P) and phosphatidylinositol 3,5-bisphosphate (PI(3,5)P2). Negatively regulates accumulation of PI3P on intracellular vesicles. Negatively regulates phagocytosis of apoptotic cells probably by limiting the recruitment and/or the activation of ced-5, ced-2 and ced-12 complex. In addition, may positively regulate phagosome maturation by promoting recycling of apoptotic receptor ced-1 back to the plasma membrane. Essential for embryonic and larval development. May promote migration of distal tip cells. The protein is Phosphatidylinositol-3,5-bisphosphate 3-phosphatase mtm-1 of Caenorhabditis elegans.